We begin with the raw amino-acid sequence, 355 residues long: Uroporphyrinogen decarboxylase (355 aa).

Substrate is bound by residues 27-31, D77, Y154, T209, and H327; that span reads RQAGR.

Belongs to the uroporphyrinogen decarboxylase family. Homodimer.

The protein resides in the cytoplasm. It carries out the reaction uroporphyrinogen III + 4 H(+) = coproporphyrinogen III + 4 CO2. Its pathway is porphyrin-containing compound metabolism; protoporphyrin-IX biosynthesis; coproporphyrinogen-III from 5-aminolevulinate: step 4/4. Functionally, catalyzes the decarboxylation of four acetate groups of uroporphyrinogen-III to yield coproporphyrinogen-III. The sequence is that of Uroporphyrinogen decarboxylase from Yersinia pseudotuberculosis serotype O:1b (strain IP 31758).